Consider the following 185-residue polypeptide: Ribosome-recycling factor (185 aa).

It belongs to the RRF family.

It localises to the cytoplasm. Its function is as follows. Responsible for the release of ribosomes from messenger RNA at the termination of protein biosynthesis. May increase the efficiency of translation by recycling ribosomes from one round of translation to another. This Ehrlichia ruminantium (strain Gardel) protein is Ribosome-recycling factor.